The primary structure comprises 323 residues: Mitochondrial glutamate carrier 1 (323 aa).

3 Solcar repeats span residues 6-93, 101-214, and 223-312; these read ISLP…FRHQ, LTLP…LNQL, and SPFY…GIAE. The next 6 membrane-spanning stretches (helical) occupy residues 12–32, 62–82, 107–127, 189–209, 223–243, and 292–312; these read LINGGIAGLIGVTCVFPIDLA, YFGMYRGAAVNLTLVTPEKAI, MLAGCGAGTCQVIVTTPMEML, GLGATLLRDVPFSIVYFPLFA, SPFYVSFLAGCVAGSAAAVAV, and ALVIAPLFGIAQVVYFLGIAE.

This sequence belongs to the mitochondrial carrier (TC 2.A.29) family.

The protein localises to the mitochondrion inner membrane. The enzyme catalyses L-glutamate(in) + H(+)(in) = L-glutamate(out) + H(+)(out). Its function is as follows. Mitochondrial glutamate/H(+) symporter. Responsible for the transport of glutamate from the cytosol into the mitochondrial matrix with the concomitant import of a proton. Plays a role in the control of glucose-stimulated insulin secretion. The sequence is that of Mitochondrial glutamate carrier 1 (Slc25a22) from Mus musculus (Mouse).